A 1305-amino-acid polypeptide reads, in one-letter code: MSQKGIKSLTISIASPEQILSWSKGEITKPETINYKSLKPEPNGLFDESIFGPSKDYECYCGKYRKVKHKGKVCERCHVEITESIVRRERMGHIELAAPVAHIWFTKELPSPSKISLLLDITYKEVDQVVYFVNYIVLDEGNNEYDGKSIFNKKEVLDLTSPKNSIRSRNKLRRTLRNIQERIEEELNHEREALIQDFDYRLAVTYDQMLKDSNIPFSVKDVMAFIEKHTGVRFGIGAEAIHELLEKLNLEEEHEKIKQAIQNSPNAYDQKTKRLLRRLECVRWIKDSGSKPEWMVMTRIPVTPSETRPIISLDGGRFTTSDTNNFYRKIIIRNERLKQMQATDAPEILLDNEKRLLQEAVDSLFDNNSRKKPVVGKDKRPLKSLSNHLKGKQGLFRQNLLGKRVDYSGRSVIVVGPELKMYEVGIPALMILKLFRPYIISELIRKRDEFGNEIQPICANIKLAEQKILAQDDEIWPVVEKVIKQRPVILNRAPTLHRLGIQAFEPKMVDGKAIRLHPLVTTAFNADFDGDQMAVHIPLSKEAVAEARSILLASWHILGPKDGKPIITPTQDMILGIYYLTKEKFPQPIEEMILKDPVQARIEFINHFHIFATQDEAIRAYKLKTIRINDVIGITTKAFDNKSFSKEGILVTTVGKIIFNQAFPTNFPYINDVKNLYGDNQFEIIGMHESILDYLKAYNLKEPLTKKTLSTVIDYLYKVSEIEVVPQTMDKIKALGFKYSMISATSISAFDIPSYDQKYEYFKETDELVAKLREFYLDGKLTDDERYTKVVQAWSQTKDKVTHDIEKLINSDEYKDNPIVIMAKSGARGNTSNFTQLAGMRGLMSKSYNYDQKNNSGVIKDTIEIPIKHSFIEGLSVSEYFNSSFGARKGMTDTAMKTAKSGYMTRKLVDSTQAVVIKGNDCGTKEGIIVREIRNTKDNTSIESLKDRIVGRFSINPIYDTKNKLIIEGDKLITNEIANMIQNSGIREVEVRSPLHCSSLYGVCQKCFGLDLSTNKLIETGTAIGVIAAQSIGEPGTQLTMRTFHTGGVAGDTNITQGFERIKQLFDCIQPQENEKAIISQVKGTVDRIEKDSNTNGYNVVIKYNKDNFVSYPTRPNAVLRIKTGDNVVAGQKITEGSIDVNDLLKYAGIENVRHYIIKEVQKVYRMQGIEISDKYIEVIISQLTNKVTITNPGDSGLFVGETISINEFTEVAQSMLVNKKKPPSAINQVFGLDHAPSKSGSFLSAASFQDTKKILTDAAARSQKDMLIGLKENVILGNLIPAGTGLKDVEEVIAYGEEMYKKQY.

Zn(2+)-binding residues include Cys59, Cys61, Cys74, and Cys77. Residues Asp527, Asp529, and Asp531 each coordinate Mg(2+). The Zn(2+) site is built by Cys922, Cys997, Cys1004, and Cys1007.

It belongs to the RNA polymerase beta' chain family. In terms of assembly, the RNAP catalytic core consists of 2 alpha, 1 beta, 1 beta' and 1 omega subunit. When a sigma factor is associated with the core the holoenzyme is formed, which can initiate transcription. It depends on Mg(2+) as a cofactor. Zn(2+) serves as cofactor.

It catalyses the reaction RNA(n) + a ribonucleoside 5'-triphosphate = RNA(n+1) + diphosphate. In terms of biological role, DNA-dependent RNA polymerase catalyzes the transcription of DNA into RNA using the four ribonucleoside triphosphates as substrates. The sequence is that of DNA-directed RNA polymerase subunit beta' from Ureaplasma urealyticum serovar 10 (strain ATCC 33699 / Western).